We begin with the raw amino-acid sequence, 180 residues long: Bifunctional protein PyrR (180 aa).

Positions Val99–Thr111 match the PRPP-binding motif.

This sequence belongs to the purine/pyrimidine phosphoribosyltransferase family. PyrR subfamily. In terms of assembly, homodimer and homohexamer; in equilibrium.

The enzyme catalyses UMP + diphosphate = 5-phospho-alpha-D-ribose 1-diphosphate + uracil. In terms of biological role, regulates transcriptional attenuation of the pyrimidine nucleotide (pyr) operon by binding in a uridine-dependent manner to specific sites on pyr mRNA. This disrupts an antiterminator hairpin in the RNA and favors formation of a downstream transcription terminator, leading to a reduced expression of downstream genes. Functionally, also displays a weak uracil phosphoribosyltransferase activity which is not physiologically significant. This is Bifunctional protein PyrR from Clostridium botulinum (strain Alaska E43 / Type E3).